Consider the following 359-residue polypeptide: Aromatic amino acid aminotransferase (359 aa).

The span at 1–12 (MSETSPKLRAEL) shows a compositional bias: basic and acidic residues. A disordered region spans residues 1-21 (MSETSPKLRAELEGIPTYKPG). The residue at position 223 (Lys-223) is an N6-(pyridoxal phosphate)lysine.

The protein belongs to the class-II pyridoxal-phosphate-dependent aminotransferase family. In terms of assembly, homodimer. Pyridoxal 5'-phosphate is required as a cofactor.

It carries out the reaction an aromatic L-alpha-amino acid + 2-oxoglutarate = an aromatic oxo-acid + L-glutamate. Its function is as follows. Aminotransferase that catalyzes the conversion of aromatic amino acids and 2-oxoglutarate into corresponding aromatic oxo acids and L-glutamate. This chain is Aromatic amino acid aminotransferase, found in Streptomyces coelicolor (strain ATCC BAA-471 / A3(2) / M145).